Here is a 2206-residue protein sequence, read N- to C-terminus: Genome polyprotein (2206 aa).

The N-myristoyl glycine; by host moiety is linked to residue Gly-2. Over 2–1517 the chain is Cytoplasmic; it reads GAQVSSQKVG…NINRAMTILQ (1516 aa). 2 amphipathic alpha-helix regions span residues 579 to 599 and 579 to 603; these read GIED…LPKQ and GIED…QDSL. Catalysis depends on for protease 2A activity residues His-898 and Asp-916. Residues Cys-933 and Cys-935 each coordinate Zn(2+). The active-site For protease 2A activity is the Cys-987. The Zn(2+) site is built by Cys-993 and His-995. Positions 1125–1197 are membrane-binding; it reads GDSWLKKFTE…HQSCPSQEHQ (73 aa). The oligomerization stretch occupies residues 1125–1263; the sequence is GDSWLKKFTE…SPGTGKSVAT (139 aa). An RNA-binding region spans residues 1146-1150; sequence SNKIS. Residues 1229–1385 form the SF3 helicase domain; the sequence is EHTINNYIQF…GEYSRDGKLN (157 aa). 1253-1260 contacts ATP; it reads GSPGTGKS. Positions 1393, 1396, 1405, and 1410 each coordinate Zn(2+). The C4-type zinc-finger motif lies at 1393 to 1410; sequence CKDCHQPANFKRCCPLVC. Residues 1437–1444 are RNA-binding; it reads ERNRRSNI. Residues 1448 to 1453 form an oligomerization region; that stretch reads MEALFQ. An intramembrane segment occupies 1518-1533; it reads AVTTFAAVAGVVYVMY. At 1534-2206 the chain is on the cytoplasmic side; that stretch reads KLFAGHQGAY…TLYRRWLDSF (673 aa). O-(5'-phospho-RNA)-tyrosine is present on Tyr-1543. A Peptidase C3 domain is found at 1563–1741; it reads GPGFDYAVAM…FAAALKRSYF (179 aa). Catalysis depends on for protease 3C activity residues His-1602, Glu-1633, and Cys-1709. Positions 1972–2087 constitute a RdRp catalytic domain; that stretch reads EKLFAFDYTG…SYPHEVDASL (116 aa). Asp-1978 and Asp-2073 together coordinate Mg(2+).

Belongs to the picornaviruses polyprotein family. In terms of assembly, interacts with capsid protein VP1 and capsid protein VP3 to form heterotrimeric protomers. Interacts with capsid protein VP0, and capsid protein VP3 to form heterotrimeric protomers. Interacts with human PVR. Five protomers subsequently associate to form pentamers which serve as building blocks for the capsid. Interacts with capsid protein VP2, capsid protein VP3 and capsid protein VP4 following cleavage of capsid protein VP0. As to quaternary structure, interacts with capsid protein VP1 and capsid protein VP3 in the mature capsid. In terms of assembly, interacts with capsid protein VP0 and capsid protein VP1 to form heterotrimeric protomers. Five protomers subsequently associate to form pentamers which serve as building blocks for the capsid. Interacts with capsid protein VP4 in the mature capsid. Interacts with protein 2C; this interaction may be important for virion morphogenesis. Interacts with capsid protein VP1 and capsid protein VP3. As to quaternary structure, homodimer. In terms of assembly, homohexamer; forms a hexameric ring structure with 6-fold symmetry characteristic of AAA+ ATPases. Interacts (via N-terminus) with host RTN3 (via reticulon domain); this interaction is important for viral replication. Interacts with capsid protein VP3; this interaction may be important for virion morphogenesis. Interacts with protein 3CD. As to quaternary structure, homodimer. Interacts with host GBF1. Interacts (via GOLD domain) with host ACBD3 (via GOLD domain); this interaction allows the formation of a viral protein 3A/ACBD3 heterotetramer with a 2:2 stoichiometry, which will stimulate the recruitment of host PI4KB in order to synthesize PI4P at the viral RNA replication sites. In terms of assembly, interacts with RNA-directed RNA polymerase. Interacts with protein 3AB and with RNA-directed RNA polymerase. As to quaternary structure, interacts with Viral protein genome-linked and with protein 3CD. The cofactor is Mg(2+). In terms of processing, specific enzymatic cleavages in vivo by the viral proteases yield processing intermediates and the mature proteins. Myristoylation is required for the formation of pentamers during virus assembly. Further assembly of 12 pentamers and a molecule of genomic RNA generates the provirion. Post-translationally, during virion maturation, immature virions are rendered infectious following cleavage of VP0 into VP4 and VP2. This maturation seems to be an autocatalytic event triggered by the presence of RNA in the capsid and it is followed by a conformational change infectious virion. In terms of processing, myristoylation is required during RNA encapsidation and formation of the mature virus particle. VPg is uridylylated by the polymerase into VPg-pUpU. This acts as a nucleotide-peptide primer for the genomic RNA replication.

It localises to the virion. Its subcellular location is the host cytoplasm. The protein localises to the host cytoplasmic vesicle membrane. It is found in the host nucleus. It carries out the reaction a ribonucleoside 5'-triphosphate + H2O = a ribonucleoside 5'-diphosphate + phosphate + H(+). The catalysed reaction is Selective cleavage of Tyr-|-Gly bond in the picornavirus polyprotein.. It catalyses the reaction RNA(n) + a ribonucleoside 5'-triphosphate = RNA(n+1) + diphosphate. The enzyme catalyses Selective cleavage of Gln-|-Gly bond in the poliovirus polyprotein. In other picornavirus reactions Glu may be substituted for Gln, and Ser or Thr for Gly.. Its activity is regulated as follows. Replication or transcription is subject to high level of random mutations by the nucleotide analog ribavirin. Forms an icosahedral capsid of pseudo T=3 symmetry with capsid proteins VP2 and VP3. The capsid is 300 Angstroms in diameter, composed of 60 copies of each capsid protein and enclosing the viral positive strand RNA genome. Capsid protein VP1 mainly forms the vertices of the capsid. Capsid protein VP1 interacts with host cell receptor PVR to provide virion attachment to target host cells. This attachment induces virion internalization predominantly through clathrin- and caveolin-independent endocytosis in Hela cells and through caveolin-mediated endocytosis in brain microvascular endothelial cells. Tyrosine kinases are probably involved in the entry process. Virus binding to PVR induces increased junctional permeability and rearrangement of junctional proteins. Modulation of endothelial tight junctions, as well as cytolytic infection of endothelial cells themselves, may result in loss of endothelial integrity which may help the virus to reach the CNS. After binding to its receptor, the capsid undergoes conformational changes. Capsid protein VP1 N-terminus (that contains an amphipathic alpha-helix) and capsid protein VP4 are externalized. Together, they shape a pore in the host membrane through which viral genome is translocated to host cell cytoplasm. Functionally, forms an icosahedral capsid of pseudo T=3 symmetry with capsid proteins VP2 and VP3. The capsid is 300 Angstroms in diameter, composed of 60 copies of each capsid protein and enclosing the viral positive strand RNA genome. Its function is as follows. Lies on the inner surface of the capsid shell. After binding to the host receptor, the capsid undergoes conformational changes. Capsid protein VP4 is released, Capsid protein VP1 N-terminus is externalized, and together, they shape a pore in the host membrane through which the viral genome is translocated into the host cell cytoplasm. In terms of biological role, component of immature procapsids, which is cleaved into capsid proteins VP4 and VP2 after maturation. Allows the capsid to remain inactive before the maturation step. Cysteine protease that cleaves viral polyprotein and specific host proteins. It is responsible for the autocatalytic cleavage between the P1 and P2 regions, which is the first cleavage occurring in the polyprotein. Also cleaves the host translation initiation factor EIF4G1, in order to shut down the capped cellular mRNA translation. Inhibits the host nucleus-cytoplasm protein and RNA trafficking by cleaving host members of the nuclear pores including NUP98, NUP62 and NUP153. Counteracts stress granule formation probably by antagonizing its assembly or promoting its dissassembly. Cleaves and inhibits host IFIH1/MDA5, thereby inhibiting the type-I IFN production and the establishment of the antiviral state. Cleaves and inhibits host MAVS, thereby inhibiting the type-I IFN production and the establishment of the antiviral state. Functionally, plays an essential role in the virus replication cycle by acting as a viroporin. Creates a pore in the host endoplasmic reticulum and as a consequence releases Ca2+ in the cytoplasm of infected cell. In turn, high levels of cytoplasmic calcium may trigger membrane trafficking and transport of viral ER-associated proteins to viroplasms, sites of viral genome replication. Its function is as follows. Induces and associates with structural rearrangements of intracellular membranes. Displays RNA-binding, nucleotide binding and NTPase activities. May play a role in virion morphogenesis and viral RNA encapsidation by interacting with the capsid protein VP3. In terms of biological role, localizes the viral replication complex to the surface of membranous vesicles. Together with protein 3CD binds the Cis-Active RNA Element (CRE) which is involved in RNA synthesis initiation. Acts as a cofactor to stimulate the activity of 3D polymerase, maybe through a nucleid acid chaperone activity. Localizes the viral replication complex to the surface of membranous vesicles. It inhibits host cell endoplasmic reticulum-to-Golgi apparatus transport and causes the disassembly of the Golgi complex, possibly through GBF1 interaction. This would result in depletion of MHC, trail receptors and IFN receptors at the host cell surface. Plays an essential role in viral RNA replication by recruiting ACBD3 and PI4KB at the viral replication sites, thereby allowing the formation of the rearranged membranous structures where viral replication takes place. Functionally, acts as a primer for viral RNA replication and remains covalently bound to viral genomic RNA. VPg is uridylylated prior to priming replication into VPg-pUpU. The oriI viral genomic sequence may act as a template for this. The VPg-pUpU is then used as primer on the genomic RNA poly(A) by the RNA-dependent RNA polymerase to replicate the viral genome. During genome replication, the VPg-RNA linkage is removed by the host TDP2, thereby accelerating replication. During the late stage of the replication cycle, host TDP2 is excluded from sites of viral RNA synthesis and encapsidation, allowing for the generation of progeny virions. Its function is as follows. Involved in the viral replication complex and viral polypeptide maturation. It exhibits protease activity with a specificity and catalytic efficiency that is different from protease 3C. Protein 3CD lacks polymerase activity. Protein 3CD binds to the 5'UTR of the viral genome. In terms of biological role, major viral protease that mediates proteolytic processing of the polyprotein. Cleaves host EIF5B, contributing to host translation shutoff. Also cleaves host PABPC1, contributing to host translation shutoff. Cleaves host RIGI and thus contributes to the inhibition of type I interferon production. Cleaves host NLRP1, triggers host N-glycine-mediated degradation of the autoinhibitory NLRP1 N-terminal fragment. Inhibits the integrated stress response (ISR) in the infected cell by cleaving host G3BP1. Stress granule formation is thus inhibited, which allows protein synthesis and viral replication. Replicates the viral genomic RNA on the surface of intracellular membranes. May form linear arrays of subunits that propagate along a strong head-to-tail interaction called interface-I. Covalently attaches UMP to a tyrosine of VPg, which is used to prime RNA synthesis. The positive stranded RNA genome is first replicated at virus induced membranous vesicles, creating a dsRNA genomic replication form. This dsRNA is then used as template to synthesize positive stranded RNA genomes. ss(+)RNA genomes are either translated, replicated or encapsidated. In Poliovirus type 3 (strains P3/Leon/37 and P3/Leon 12A[1]B), this protein is Genome polyprotein.